A 469-amino-acid polypeptide reads, in one-letter code: Argininosuccinate lyase (469 aa).

Belongs to the lyase 1 family. Argininosuccinate lyase subfamily.

The protein resides in the cytoplasm. The catalysed reaction is 2-(N(omega)-L-arginino)succinate = fumarate + L-arginine. The protein operates within amino-acid biosynthesis; L-arginine biosynthesis; L-arginine from L-ornithine and carbamoyl phosphate: step 3/3. The chain is Argininosuccinate lyase from Polaromonas naphthalenivorans (strain CJ2).